Here is a 131-residue protein sequence, read N- to C-terminus: Inner membrane protein YecN (131 aa).

Over 1-107 the chain is Cytoplasmic; that stretch reads MVSALYAVLS…RWRRSGMSAT (107 aa). The helical transmembrane segment at 108–128 threads the bilayer; that stretch reads WCALLLMVLANLWYMPWELVF. Topologically, residues 129 to 131 are periplasmic; the sequence is SLR.

Its subcellular location is the cell inner membrane. In Escherichia coli O6:H1 (strain CFT073 / ATCC 700928 / UPEC), this protein is Inner membrane protein YecN (yecN).